A 101-amino-acid polypeptide reads, in one-letter code: NAD(P)H-quinone oxidoreductase subunit 4L, chloroplastic (101 aa).

The next 3 helical transmembrane spans lie at 2–22 (MFEY…YGLI), 32–52 (MCLE…SDLF), and 61–81 (IFSI…PAIV).

Belongs to the complex I subunit 4L family. NDH is composed of at least 16 different subunits, 5 of which are encoded in the nucleus.

It is found in the plastid. It localises to the chloroplast thylakoid membrane. The enzyme catalyses a plastoquinone + NADH + (n+1) H(+)(in) = a plastoquinol + NAD(+) + n H(+)(out). It carries out the reaction a plastoquinone + NADPH + (n+1) H(+)(in) = a plastoquinol + NADP(+) + n H(+)(out). In terms of biological role, NDH shuttles electrons from NAD(P)H:plastoquinone, via FMN and iron-sulfur (Fe-S) centers, to quinones in the photosynthetic chain and possibly in a chloroplast respiratory chain. The immediate electron acceptor for the enzyme in this species is believed to be plastoquinone. Couples the redox reaction to proton translocation, and thus conserves the redox energy in a proton gradient. The polypeptide is NAD(P)H-quinone oxidoreductase subunit 4L, chloroplastic (Amborella trichopoda).